Consider the following 126-residue polypeptide: Aspartate 1-decarboxylase (126 aa).

S25 serves as the catalytic Schiff-base intermediate with substrate; via pyruvic acid. S25 carries the pyruvic acid (Ser) modification. T57 contacts substrate. The active-site Proton donor is the Y58. 73 to 75 (GAA) contacts substrate.

This sequence belongs to the PanD family. As to quaternary structure, heterooctamer of four alpha and four beta subunits. Pyruvate serves as cofactor. Post-translationally, is synthesized initially as an inactive proenzyme, which is activated by self-cleavage at a specific serine bond to produce a beta-subunit with a hydroxyl group at its C-terminus and an alpha-subunit with a pyruvoyl group at its N-terminus.

It is found in the cytoplasm. The enzyme catalyses L-aspartate + H(+) = beta-alanine + CO2. Its pathway is cofactor biosynthesis; (R)-pantothenate biosynthesis; beta-alanine from L-aspartate: step 1/1. Functionally, catalyzes the pyruvoyl-dependent decarboxylation of aspartate to produce beta-alanine. The chain is Aspartate 1-decarboxylase from Cellvibrio japonicus (strain Ueda107) (Pseudomonas fluorescens subsp. cellulosa).